The primary structure comprises 339 residues: Heat-inducible transcription repressor HrcA (339 aa).

Belongs to the HrcA family.

Its function is as follows. Negative regulator of class I heat shock genes (grpE-dnaK-dnaJ and groELS operons). Prevents heat-shock induction of these operons. The polypeptide is Heat-inducible transcription repressor HrcA (Acidothermus cellulolyticus (strain ATCC 43068 / DSM 8971 / 11B)).